Here is a 338-residue protein sequence, read N- to C-terminus: Lipoate-protein ligase A (338 aa).

Positions Pro29–Val216 constitute a BPL/LPL catalytic domain. ATP-binding positions include Arg71, Gly76–Phe79, and Lys134. Position 134 (Lys134) interacts with (R)-lipoate.

Belongs to the LplA family. In terms of assembly, monomer.

The protein localises to the cytoplasm. It catalyses the reaction L-lysyl-[lipoyl-carrier protein] + (R)-lipoate + ATP = N(6)-[(R)-lipoyl]-L-lysyl-[lipoyl-carrier protein] + AMP + diphosphate + H(+). The protein operates within protein modification; protein lipoylation via exogenous pathway; protein N(6)-(lipoyl)lysine from lipoate: step 1/2. Its pathway is protein modification; protein lipoylation via exogenous pathway; protein N(6)-(lipoyl)lysine from lipoate: step 2/2. Its function is as follows. Catalyzes both the ATP-dependent activation of exogenously supplied lipoate to lipoyl-AMP and the transfer of the activated lipoyl onto the lipoyl domains of lipoate-dependent enzymes. This is Lipoate-protein ligase A from Klebsiella pneumoniae subsp. pneumoniae (strain ATCC 700721 / MGH 78578).